A 353-amino-acid chain; its full sequence is tRNA N6-adenosine threonylcarbamoyltransferase (353 aa).

Fe cation contacts are provided by histidine 115 and histidine 119. Residues 138–142 (LVSGG), aspartate 171, glycine 184, and asparagine 276 each bind substrate. Aspartate 304 lines the Fe cation pocket.

The protein belongs to the KAE1 / TsaD family. The cofactor is Fe(2+).

The protein resides in the cytoplasm. It catalyses the reaction L-threonylcarbamoyladenylate + adenosine(37) in tRNA = N(6)-L-threonylcarbamoyladenosine(37) in tRNA + AMP + H(+). Functionally, required for the formation of a threonylcarbamoyl group on adenosine at position 37 (t(6)A37) in tRNAs that read codons beginning with adenine. Is involved in the transfer of the threonylcarbamoyl moiety of threonylcarbamoyl-AMP (TC-AMP) to the N6 group of A37, together with TsaE and TsaB. TsaD likely plays a direct catalytic role in this reaction. This is tRNA N6-adenosine threonylcarbamoyltransferase from Xanthomonas euvesicatoria pv. vesicatoria (strain 85-10) (Xanthomonas campestris pv. vesicatoria).